The chain runs to 104 residues: Pyrimidine/purine nucleoside phosphorylase (104 aa).

Belongs to the nucleoside phosphorylase PpnP family.

The catalysed reaction is a purine D-ribonucleoside + phosphate = a purine nucleobase + alpha-D-ribose 1-phosphate. The enzyme catalyses adenosine + phosphate = alpha-D-ribose 1-phosphate + adenine. It carries out the reaction cytidine + phosphate = cytosine + alpha-D-ribose 1-phosphate. It catalyses the reaction guanosine + phosphate = alpha-D-ribose 1-phosphate + guanine. The catalysed reaction is inosine + phosphate = alpha-D-ribose 1-phosphate + hypoxanthine. The enzyme catalyses thymidine + phosphate = 2-deoxy-alpha-D-ribose 1-phosphate + thymine. It carries out the reaction uridine + phosphate = alpha-D-ribose 1-phosphate + uracil. It catalyses the reaction xanthosine + phosphate = alpha-D-ribose 1-phosphate + xanthine. Functionally, catalyzes the phosphorolysis of diverse nucleosides, yielding D-ribose 1-phosphate and the respective free bases. Can use uridine, adenosine, guanosine, cytidine, thymidine, inosine and xanthosine as substrates. Also catalyzes the reverse reactions. The chain is Pyrimidine/purine nucleoside phosphorylase from Leptospira borgpetersenii serovar Hardjo-bovis (strain L550).